The chain runs to 136 residues: MLQPKNTKFRKMHKGKNRGLAIGTNVHFGLYGLKAITRGRLKSSQIESARRAITRAIKRQGKIWIRIFPDKPITKKPLEVRMGKGKGNVEYWVALVQPGKILYEISGVSEELSRIAFKLAAAKLPVKTMFVTKLVM.

It belongs to the universal ribosomal protein uL16 family. In terms of assembly, part of the 50S ribosomal subunit.

In terms of biological role, binds 23S rRNA and is also seen to make contacts with the A and possibly P site tRNAs. In Buchnera aphidicola subsp. Baizongia pistaciae (strain Bp), this protein is Large ribosomal subunit protein uL16.